The following is a 211-amino-acid chain: FMN-dependent NADH:quinone oxidoreductase 3 (211 aa).

Position 102-105 (102-105 (MWNF)) interacts with FMN.

It belongs to the azoreductase type 1 family. Homodimer. It depends on FMN as a cofactor.

It catalyses the reaction 2 a quinone + NADH + H(+) = 2 a 1,4-benzosemiquinone + NAD(+). It carries out the reaction N,N-dimethyl-1,4-phenylenediamine + anthranilate + 2 NAD(+) = 2-(4-dimethylaminophenyl)diazenylbenzoate + 2 NADH + 2 H(+). Functionally, quinone reductase that provides resistance to thiol-specific stress caused by electrophilic quinones. In terms of biological role, also exhibits azoreductase activity. Catalyzes the reductive cleavage of the azo bond in aromatic azo compounds to the corresponding amines. The sequence is that of FMN-dependent NADH:quinone oxidoreductase 3 from Bacillus cereus (strain ZK / E33L).